The following is a 705-amino-acid chain: Dolichyl-diphosphooligosaccharide--protein glycosyltransferase subunit STT3A (705 aa).

Residues 1–15 (MTKLGFLRLSYEKQD) are Cytoplasmic-facing. Residues 16 to 34 (TLLKLLILSMAAVLSFSTR) form a helical membrane-spanning segment. The Lumenal portion of the chain corresponds to 35-111 (LFAVLRFESV…VLHFFHITID (77 aa)). The DXD motif 1 signature appears at 47 to 49 (EFD). Asp49 is a binding site for Mn(2+). A helical transmembrane segment spans residues 112–141 (IRNVCVFLAPLFSSFTTIVTYHLTKELKDA). Position 142 (Gly142) is a topological domain, cytoplasmic. Residues 143 to 158 (AGLLAAAMIAVVPGYI) traverse the membrane as a helical segment. Topologically, residues 159-170 (SRSVAGSYDNEG) are lumenal. Residues Asp167 and Glu169 each contribute to the Mn(2+) site. A DXD motif 2 motif is present at residues 167-169 (DNE). A helical membrane pass occupies residues 171-188 (IAIFCMLLTYYMWIKAVK). Residues 189–191 (TGS) lie on the Cytoplasmic side of the membrane. Residues 192–207 (IYWAAKCALAYFYMVS) traverse the membrane as a helical segment. Residues 208–210 (SWG) lie on the Lumenal side of the membrane. A helical membrane pass occupies residues 211–229 (GYVFLINLIPLHVLVLMLT). Over 230–234 (GRFSH) the chain is Cytoplasmic. A helical membrane pass occupies residues 235–253 (RIYVAYCTVYCLGTILSMQ). Over 254 to 265 (ISFVGFQPVLSS) the chain is Lumenal. A helical transmembrane segment spans residues 266–283 (EHMAAFGVFGLCQIHAFV). Residues 284 to 298 (DYLRSKLNPQQFEVL) lie on the Cytoplasmic side of the membrane. Residues 299–317 (FRSVISLVGFVLLTVGALL) traverse the membrane as a helical segment. Residues 318–356 (MLTGKISPWTGRFYSLLDPSYAKNNIPIIASVSEHQPTT) are Lumenal-facing. The short motif at 348–351 (SVSE) is the SVSE motif element. A helical transmembrane segment spans residues 357 to 379 (WSSYYFDLQLLVFMFPVGLYYCF). Residues 380–385 (SNLSDA) are Cytoplasmic-facing. The chain crosses the membrane as a helical span at residues 386–402 (RIFIIMYGVTSMYFSAV). Topologically, residues 403–406 (MVRL) are lumenal. Arg405 contacts dolichyl diphosphooligosaccharide. Residues 407-428 (MLVLAPVMCILSGIGVSQVLST) form a helical membrane-spanning segment. Residues 429–453 (YMKNLDISRPDKKSKKQQDSTYPIK) are Cytoplasmic-facing. The chain crosses the membrane as a helical span at residues 454 to 473 (NEVASGMILVMAFFLITYTF). Topologically, residues 474–705 (HSTWVTSEAY…DLDNRGLSRT (232 aa)) are lumenal. Positions 525-527 (WWD) are interacts with target acceptor peptide in protein substrate. The WWDYG motif signature appears at 525–529 (WWDYG). Tyr530 lines the dolichyl diphosphooligosaccharide pocket. N-linked (GlcNAc...) asparagine glycosylation is found at Asn537 and Asn544. Asn548 carries an N-linked (GlcNAc...) (high mannose) asparagine glycan. Positions 592 to 599 (DINKFLWM) match the DK motif motif.

Belongs to the STT3 family. In terms of assembly, component of the oligosaccharyltransferase (OST) complex. There are 2 OST complexes, OST-A and OST-B, which contain STT3A or STT3B as catalytic subunit, respectively. OST-A and OST-B contain common core subunits RPN1, RPN2, OST48, OST4, DAD1 and TMEM258, and OST-A contains DC2/OSTC and KRTCAP2/KCP2 specific accessory subunits. OST-A complex assembly occurs through the formation of 3 subcomplexes. Subcomplex 1 contains RPN1 and TMEM258, subcomplex 2 contains the OST-A-specific subunits STT3A, DC2/OSTC, and KCP2 as well as the core subunit OST4, and subcomplex 3 contains RPN2, DAD1, and OST48. The OST-A complex can form stable complexes with the Sec61 complex or with both the Sec61 and TRAP complexes. Mg(2+) is required as a cofactor. Requires Mn(2+) as cofactor.

It is found in the endoplasmic reticulum membrane. The enzyme catalyses a di-trans,poly-cis-dolichyl diphosphooligosaccharide + L-asparaginyl-[protein] = N(4)-(oligosaccharide-(1-&gt;4)-N-acetyl-beta-D-glucosaminyl-(1-&gt;4)-N-acetyl-beta-D-glucosaminyl)-L-asparaginyl-[protein] + a di-trans,poly-cis-dolichyl diphosphate + H(+). Its pathway is protein modification; protein glycosylation. Functionally, catalytic subunit of the oligosaccharyl transferase (OST) complex that catalyzes the initial transfer of a defined glycan (Glc(3)Man(9)GlcNAc(2) in eukaryotes) from the lipid carrier dolichol-pyrophosphate to an asparagine residue within an Asn-X-Ser/Thr consensus motif in nascent polypeptide chains, the first step in protein N-glycosylation. N-glycosylation occurs cotranslationally and the complex associates with the Sec61 complex at the channel-forming translocon complex that mediates protein translocation across the endoplasmic reticulum (ER). All subunits are required for a maximal enzyme activity. This subunit contains the active site and the acceptor peptide and donor lipid-linked oligosaccharide (LLO) binding pockets. STT3A is present in the majority of OST complexes and mediates cotranslational N-glycosylation of most sites on target proteins, while STT3B-containing complexes are required for efficient post-translational glycosylation and mediate glycosylation of sites that have been skipped by STT3A. STT3A-containing OST-A complex is also required to prevent hyperglycosylation of some target proteins by preventing glycosylation of facultative sites before folding of target proteins is completed. The protein is Dolichyl-diphosphooligosaccharide--protein glycosyltransferase subunit STT3A of Canis lupus familiaris (Dog).